The sequence spans 338 residues: MNAHANPRPAVRSDWTREEIAALFDLPFNDLLWQAQAAHRAAHAANEVQLSTLLSIKTGGCPEDCGYCNQSVHAETGLKATKLMDVRAVLQSAAQARDAGSTRFCMGAAWRNPKDRDMPAIVEMVKGVRQMGMETCMTLGMLTGDQARTLADAGLDYYNHNIDTAPERYDQVITTRTFEDRIETLEHVREAGINVCCGGIVGMGETRADRVGFIHALATLPVHPESVPVNALVPVKGTVLGDMLADTPLAKIDEIEFVRTVAVARITMPASMVRLSAGRESMSDAAQALCFMAGANSIFTGDKLLTTDNAGDDRDAALFARLGVTPMAAECKVELAAE.

The Radical SAM core domain maps to Asn-46 to Ala-270. Residues Cys-61, Cys-65, and Cys-68 each coordinate [4Fe-4S] cluster. 4 residues coordinate [2Fe-2S] cluster: Cys-105, Cys-136, Cys-196, and Arg-274.

It belongs to the radical SAM superfamily. Biotin synthase family. Homodimer. It depends on [4Fe-4S] cluster as a cofactor. [2Fe-2S] cluster serves as cofactor.

It catalyses the reaction (4R,5S)-dethiobiotin + (sulfur carrier)-SH + 2 reduced [2Fe-2S]-[ferredoxin] + 2 S-adenosyl-L-methionine = (sulfur carrier)-H + biotin + 2 5'-deoxyadenosine + 2 L-methionine + 2 oxidized [2Fe-2S]-[ferredoxin]. It participates in cofactor biosynthesis; biotin biosynthesis; biotin from 7,8-diaminononanoate: step 2/2. In terms of biological role, catalyzes the conversion of dethiobiotin (DTB) to biotin by the insertion of a sulfur atom into dethiobiotin via a radical-based mechanism. The sequence is that of Biotin synthase from Rhizorhabdus wittichii (strain DSM 6014 / CCUG 31198 / JCM 15750 / NBRC 105917 / EY 4224 / RW1) (Sphingomonas wittichii).